The following is a 304-amino-acid chain: Myelin basic protein (304 aa).

2 stretches are compositionally biased toward basic and acidic residues: residues 1-12 and 22-32; these read MGNHAGKRELNA and NRGESEKKRNL. Positions 1 to 146 are disordered; the sequence is MGNHAGKREL…QKRPSQRHGS (146 aa). Gly-2 carries the N-acetylalanine modification. Polar residues predominate over residues 51 to 65; that stretch reads ANQNNGTSSQDTAVT. The segment covering 95-113 has biased composition (basic and acidic residues); the sequence is FSRDAPGREDNTFKDRPSE. Ser-96 bears the Phosphoserine mark. A compositionally biased stretch (polar residues) spans 117–130; the sequence is LQTIQEDSAATSES. Ser-141 and Ser-146 each carry phosphoserine. Tyr-148 carries the phosphotyrosine modification. Thr-151 carries the phosphothreonine modification. Position 153 is a phosphoserine (Ser-153). Thr-154 is subject to Phosphothreonine. Arg-159 and Arg-165 each carry citrulline; in form C8. A Citrulline modification is found at Arg-167. At Thr-169 the chain carries Phosphothreonine. Residue Ser-174 is modified to Phosphoserine. Residues Arg-177 and Arg-183 each carry the omega-N-methylarginine modification. The segment at 179–222 is induces experimental autoimmune encephalomyelitis (EAE) 1; the sequence is FGGDRGAPKRGSGKDSHHPARTAHYGSLPQKSHGRTQDENPVVH. The disordered stretch occupies residues 180–249; that stretch reads GGDRGAPKRG…GRGLSLSRFS (70 aa). The residue at position 190 (Ser-190) is a Phosphoserine. Citrulline is present on Arg-199. Tyr-203 is modified (phosphotyrosine). Ser-210 carries the phosphoserine modification. Phosphothreonine occurs at positions 214 and 229. Citrulline is present on Arg-231. Thr-232 is modified (phosphothreonine). Residue Gln-237 is modified to Deamidated glutamine. The residue at position 241 (Arg-241) is an Omega-N-methylarginine; alternate. At Arg-241 the chain carries Symmetric dimethylarginine; alternate. Positions 246 to 256 are induces experimental autoimmune encephalomyelitis (EAE) 2; it reads SRFSWGAEGQR. The residue at position 249 (Ser-249) is a Phosphoserine. Citrulline; in form C8 occurs at positions 256 and 264. Residue Gln-281 is modified to Deamidated glutamine. Position 293 is a citrulline; in form C8 (Arg-293). At Ser-295 the chain carries Phosphoserine. At Arg-296 the chain carries Citrulline. Residue Ser-299 is modified to Phosphoserine; by UHMK1. At Arg-303 the chain carries Citrulline. The residue at position 304 (Arg-304) is a Citrulline; in form C8.

Belongs to the myelin basic protein family. As to quaternary structure, homodimer. Isoform 3 exists as a homodimer. Several charge isomers of MBP; C1 (the most cationic, least modified, and most abundant form), C2, C3, C4, C5, C6, C7, C8-A and C8-B (the least cationic form); are produced as a result of optional PTM, such as phosphorylation, deamidation of glutamine or asparagine, arginine citrullination and methylation. C8-A and C8-B contain each two mass isoforms termed C8-A(H), C8-A(L), C8-B(H) and C8-B(L), (H) standing for higher and (L) for lower molecular weight. C3, C4 and C5 are phosphorylated. The ratio of methylated arginine residues decreases during aging, making the protein more cationic. In terms of processing, the N-terminal alanine is acetylated (isoform 3, isoform 4, isoform 5 and isoform 6). Post-translationally, arg-241 was found to be 6% monomethylated and 60% symmetrically dimethylated. Proteolytically cleaved in B cell lysosomes by cathepsin CTSG which degrades the major immunogenic MBP epitope and prevents the activation of MBP-specific autoreactive T cells. In terms of processing, phosphorylated by TAOK2, VRK2, MAPK11, MAPK12, MAPK14 and MINK1. In terms of tissue distribution, MBP isoforms are found in both the central and the peripheral nervous system, whereas Golli-MBP isoforms are expressed in fetal thymus, spleen and spinal cord, as well as in cell lines derived from the immune system.

The protein localises to the myelin membrane. It localises to the nucleus. Its function is as follows. The classic group of MBP isoforms (isoform 4-isoform 14) are with PLP the most abundant protein components of the myelin membrane in the CNS. They have a role in both its formation and stabilization. The smaller isoforms might have an important role in remyelination of denuded axons in multiple sclerosis. The non-classic group of MBP isoforms (isoform 1-isoform 3/Golli-MBPs) may preferentially have a role in the early developing brain long before myelination, maybe as components of transcriptional complexes, and may also be involved in signaling pathways in T-cells and neural cells. Differential splicing events combined with optional post-translational modifications give a wide spectrum of isomers, with each of them potentially having a specialized function. Induces T-cell proliferation. In Homo sapiens (Human), this protein is Myelin basic protein (MBP).